Consider the following 399-residue polypeptide: Phosphoglycerate kinase (399 aa).

Substrate-binding positions include 22–24, R38, 61–64, R119, and R152; these read DFN and HLGR. ATP contacts are provided by residues K205, G296, E327, and 353–356; that span reads GGDT.

It belongs to the phosphoglycerate kinase family. Monomer.

Its subcellular location is the cytoplasm. The enzyme catalyses (2R)-3-phosphoglycerate + ATP = (2R)-3-phospho-glyceroyl phosphate + ADP. The protein operates within carbohydrate degradation; glycolysis; pyruvate from D-glyceraldehyde 3-phosphate: step 2/5. The protein is Phosphoglycerate kinase of Nitratiruptor sp. (strain SB155-2).